Reading from the N-terminus, the 397-residue chain is Cystinosin (397 aa).

Residues 1–24 (MDFSTHRLTTLLLLLLATVALGNA) form the signal peptide. The Lumenal segment spans residues 25-126 (QSSQLTVDSH…FVRVTVAKSR (102 aa)). 2 N-linked (GlcNAc...) asparagine glycosylation sites follow: Asn-43 and Asn-86. Residues 127-147 (ALIYTSIIFGWVYFVAWSVSF) traverse the membrane as a helical segment. The PQ-loop 1 domain maps to 132–187 (SIIFGWVYFVAWSVSFYPQIWSNYRRKSVEGLNFDFLALNIVGFTLYSMFNCGLYF). Residues 148–167 (YPQIWSNYRRKSVEGLNFDF) are Cytoplasmic-facing. Residues 168 to 188 (LALNIVGFTLYSMFNCGLYFI) form a helical membrane-spanning segment. At 189–210 (EDLQNEYEVRYPLGVNPVMLND) the chain is on the lumenal side. A helical membrane pass occupies residues 211-231 (VVFSLHAMFATCITILQCFFY). The Cytoplasmic segment spans residues 232–239 (QRAQQRVS). Residues 240–260 (FIAYGILAIFAVVVVVSAGLA) traverse the membrane as a helical segment. The Lumenal portion of the chain corresponds to 261-263 (GGS). A helical membrane pass occupies residues 264–284 (VIHWLDFLYYCSYVKLTITII). The PQ-loop 2 domain occupies 271–327 (LYYCSYVKLTITIIKYVPQALMNYRRKSTSGWSIGNILLDFTGGTLSMLQMILNAHN). At 285–302 (KYVPQALMNYRRKSTSGW) the chain is on the cytoplasmic side. The chain crosses the membrane as a helical span at residues 303-323 (SIGNILLDFTGGTLSMLQMIL). Over 324 to 340 (NAHNYDDWVSIFGDPTK) the chain is Lumenal. Residues 341 to 361 (FGLGLFSVLFDVFFMLQHYVF) form a helical membrane-spanning segment. Residues 362-397 (YRHSRESSSSDLTTVTDVQNRTNESPPPSEVTTEKY) lie on the Cytoplasmic side of the membrane. Residues 373 to 385 (LTTVTDVQNRTNE) show a composition bias toward polar residues. The segment at 373–397 (LTTVTDVQNRTNESPPPSEVTTEKY) is disordered.

The protein belongs to the cystinosin family.

The protein localises to the lysosome membrane. It carries out the reaction L-cystine(out) + H(+)(out) = L-cystine(in) + H(+)(in). Its function is as follows. Cystine/H(+) symporter that mediates export of cystine, the oxidized dimer of cysteine, from lysosomes. Involved in cysteine homeostasis during periods of fasting, which indirectly regulates mTORC1-mediated signaling by supporting de novo CoA synthesis, the TCA cycle and amino acid metabolism during periods of food shortage. Important for maintaining autophagy, and for development and survival during periods of fasting. This is Cystinosin from Drosophila melanogaster (Fruit fly).